The following is a 62-amino-acid chain: Small ribosomal subunit protein eS27 (62 aa).

The Zn(2+) site is built by Cys-17, Cys-20, Cys-36, and Cys-39. The segment at 17–39 (CPDCENEQVVFERASTVVECTVC) adopts a C4-type zinc-finger fold.

This sequence belongs to the eukaryotic ribosomal protein eS27 family. In terms of assembly, part of the 30S ribosomal subunit. Zn(2+) is required as a cofactor.

The sequence is that of Small ribosomal subunit protein eS27 from Methanoculleus marisnigri (strain ATCC 35101 / DSM 1498 / JR1).